The following is an 86-amino-acid chain: UPF0297 protein LCABL_08470 (86 aa).

The protein belongs to the UPF0297 family.

This is UPF0297 protein LCABL_08470 from Lacticaseibacillus casei (strain BL23) (Lactobacillus casei).